The sequence spans 90 residues: Progonadoliberin-3 (90 aa).

Positions 1-23 (MEASSRVTVQVLLLALVVQVTLS) are cleaved as a signal peptide. Position 24 is a pyrrolidone carboxylic acid (Gln-24). Residue Gly-33 is modified to Glycine amide.

This sequence belongs to the GnRH family.

The protein localises to the secreted. Stimulates the secretion of gonadotropins. The protein is Progonadoliberin-3 (gnrh3) of Sparus aurata (Gilthead sea bream).